Reading from the N-terminus, the 311-residue chain is Methionyl-tRNA formyltransferase (311 aa).

A (6S)-5,6,7,8-tetrahydrofolate-binding site is contributed by 110 to 113 (SLLP).

The protein belongs to the Fmt family.

It catalyses the reaction L-methionyl-tRNA(fMet) + (6R)-10-formyltetrahydrofolate = N-formyl-L-methionyl-tRNA(fMet) + (6S)-5,6,7,8-tetrahydrofolate + H(+). Functionally, attaches a formyl group to the free amino group of methionyl-tRNA(fMet). The formyl group appears to play a dual role in the initiator identity of N-formylmethionyl-tRNA by promoting its recognition by IF2 and preventing the misappropriation of this tRNA by the elongation apparatus. In Streptococcus pyogenes serotype M28 (strain MGAS6180), this protein is Methionyl-tRNA formyltransferase.